A 484-amino-acid polypeptide reads, in one-letter code: Aspartyl/glutamyl-tRNA(Asn/Gln) amidotransferase subunit B (484 aa).

The protein belongs to the GatB/GatE family. GatB subfamily. As to quaternary structure, heterotrimer of A, B and C subunits.

It carries out the reaction L-glutamyl-tRNA(Gln) + L-glutamine + ATP + H2O = L-glutaminyl-tRNA(Gln) + L-glutamate + ADP + phosphate + H(+). The enzyme catalyses L-aspartyl-tRNA(Asn) + L-glutamine + ATP + H2O = L-asparaginyl-tRNA(Asn) + L-glutamate + ADP + phosphate + 2 H(+). Functionally, allows the formation of correctly charged Asn-tRNA(Asn) or Gln-tRNA(Gln) through the transamidation of misacylated Asp-tRNA(Asn) or Glu-tRNA(Gln) in organisms which lack either or both of asparaginyl-tRNA or glutaminyl-tRNA synthetases. The reaction takes place in the presence of glutamine and ATP through an activated phospho-Asp-tRNA(Asn) or phospho-Glu-tRNA(Gln). In Anaeromyxobacter dehalogenans (strain 2CP-1 / ATCC BAA-258), this protein is Aspartyl/glutamyl-tRNA(Asn/Gln) amidotransferase subunit B.